Reading from the N-terminus, the 263-residue chain is Glucosamine-6-phosphate deaminase (263 aa).

Asp-67 serves as the catalytic Proton acceptor; for enolization step. Residue Asn-136 is the For ring-opening step of the active site. The active-site Proton acceptor; for ring-opening step is the His-138. Residue Glu-143 is the For ring-opening step of the active site.

Belongs to the glucosamine/galactosamine-6-phosphate isomerase family. NagB subfamily. In terms of assembly, homohexamer.

It carries out the reaction alpha-D-glucosamine 6-phosphate + H2O = beta-D-fructose 6-phosphate + NH4(+). It participates in amino-sugar metabolism; N-acetylneuraminate degradation; D-fructose 6-phosphate from N-acetylneuraminate: step 5/5. Functionally, catalyzes the reversible isomerization-deamination of glucosamine 6-phosphate (GlcN6P) to form fructose 6-phosphate (Fru6P) and ammonium ion. This Shewanella halifaxensis (strain HAW-EB4) protein is Glucosamine-6-phosphate deaminase.